The chain runs to 906 residues: Catenin alpha-2 (906 aa).

Residues 866 to 880 (KKPLVKREKPEEYQT) show a composition bias toward basic and acidic residues. The interval 866-892 (KKPLVKREKPEEYQTRVRRGSQKKHIS) is disordered. Residues 881–891 (RVRRGSQKKHI) show a composition bias toward basic residues.

This sequence belongs to the vinculin/alpha-catenin family. In terms of assembly, interacts with CDH1 and CDH2. In terms of tissue distribution, mainly in the nervous system (at protein level).

Its subcellular location is the cell membrane. It localises to the cytoplasm. It is found in the cytoskeleton. The protein localises to the cell junction. The protein resides in the adherens junction. Its subcellular location is the cell projection. It localises to the axon. It is found in the nucleus. May function as a linker between cadherin adhesion receptors and the cytoskeleton to regulate cell-cell adhesion and differentiation in the nervous system. The polypeptide is Catenin alpha-2 (CTNNA2) (Gallus gallus (Chicken)).